The primary structure comprises 158 residues: Regulator of sigma D (158 aa).

The protein belongs to the Rsd/AlgQ family. As to quaternary structure, interacts with RpoD.

It localises to the cytoplasm. In terms of biological role, binds RpoD and negatively regulates RpoD-mediated transcription activation by preventing the interaction between the primary sigma factor RpoD with the catalytic core of the RNA polymerase and with promoter DNA. May be involved in replacement of the RNA polymerase sigma subunit from RpoD to RpoS during the transition from exponential growth to the stationary phase. This chain is Regulator of sigma D, found in Escherichia fergusonii (strain ATCC 35469 / DSM 13698 / CCUG 18766 / IAM 14443 / JCM 21226 / LMG 7866 / NBRC 102419 / NCTC 12128 / CDC 0568-73).